The sequence spans 59 residues: UPF0181 protein CKO_01169 (59 aa).

The protein belongs to the UPF0181 family.

The polypeptide is UPF0181 protein CKO_01169 (Citrobacter koseri (strain ATCC BAA-895 / CDC 4225-83 / SGSC4696)).